Reading from the N-terminus, the 86-residue chain is Acyl carrier protein (86 aa).

In terms of domain architecture, Carrier spans 10 to 85 (DKIEQKVIEM…DVIQYIKERQ (76 aa)). O-(pantetheine 4'-phosphoryl)serine is present on Ser-45.

The protein belongs to the acyl carrier protein (ACP) family. 4'-phosphopantetheine is transferred from CoA to a specific serine of apo-ACP by AcpS. This modification is essential for activity because fatty acids are bound in thioester linkage to the sulfhydryl of the prosthetic group.

It localises to the cytoplasm. Its pathway is lipid metabolism; fatty acid biosynthesis. Functionally, carrier of the growing fatty acid chain in fatty acid biosynthesis. This is Acyl carrier protein from Rickettsia canadensis (strain McKiel).